We begin with the raw amino-acid sequence, 785 residues long: Formin-like protein 3 (785 aa).

A signal peptide spans 1–20 (MGRLRLAFLAISLVVFVCVS). Positions 96 to 145 (YDWLAPASSPNEPPAETPDESSPSPSEETPSVVAPSQSVPGPPRPPPQRE) are disordered. Over residues 115 to 134 (ESSPSPSEETPSVVAPSQSV) the composition is skewed to low complexity. Residues 154–174 (LIIAVASTAVLTFVFVALMFL) form a helical membrane-spanning segment. Disordered regions lie at residues 184–228 (AVGS…KKRS), 241–329 (EFST…APKT), and 730–785 (ETTK…SSPS). Residues 201–223 (STGSTENSPTVASTSRKMFSVAS) are compositionally biased toward polar residues. A compositionally biased stretch (pro residues) spans 256-303 (LKLPPGRSAPPPPPAAAPPPQPPPPPPPKPQPPPPPKIARPPPAPPKG). Positions 321–747 (DSETGAPKTK…SGKKESEMTT (427 aa)) constitute an FH2 domain. Residues 745 to 754 (MTTSDSNQPS) show a composition bias toward polar residues. The segment covering 773-785 (SDDSDDEEDSSPS) has biased composition (acidic residues).

This sequence belongs to the formin-like family. Class-I subfamily.

The protein resides in the membrane. Acts as actin nucleation factor that directs the formation of actin cables and polarized growth in pollen tubes. This chain is Formin-like protein 3 (FH3), found in Arabidopsis thaliana (Mouse-ear cress).